The sequence spans 672 residues: DNA ligase (672 aa).

NAD(+) is bound by residues 34–38, 83–84, and glutamate 113; these read DSVYD and SL. The active-site N6-AMP-lysine intermediate is the lysine 115. The NAD(+) site is built by arginine 136, glutamate 170, lysine 286, and lysine 310. The Zn(2+) site is built by cysteine 404, cysteine 407, cysteine 422, and cysteine 427. The 81-residue stretch at 592–672 folds into the BRCT domain; the sequence is STDSSFNGLR…EFIQQMEEES (81 aa).

It belongs to the NAD-dependent DNA ligase family. LigA subfamily. Requires Mg(2+) as cofactor. Mn(2+) serves as cofactor.

The enzyme catalyses NAD(+) + (deoxyribonucleotide)n-3'-hydroxyl + 5'-phospho-(deoxyribonucleotide)m = (deoxyribonucleotide)n+m + AMP + beta-nicotinamide D-nucleotide.. Its function is as follows. DNA ligase that catalyzes the formation of phosphodiester linkages between 5'-phosphoryl and 3'-hydroxyl groups in double-stranded DNA using NAD as a coenzyme and as the energy source for the reaction. It is essential for DNA replication and repair of damaged DNA. The chain is DNA ligase from Ligilactobacillus salivarius (strain UCC118) (Lactobacillus salivarius).